We begin with the raw amino-acid sequence, 548 residues long: Probable zinc metalloprotease EGY1, chloroplastic (548 aa).

The N-terminal 18 residues, 1–18 (MGTLTSVAFAAAVNIRFR), are a transit peptide targeting the chloroplast. Residues 61–76 (NSNRDDSIGENGETHK) are compositionally biased toward basic and acidic residues. The interval 61 to 116 (NSNRDDSIGENGETHKSSVVKTATFEEEDEETSKSSSTTSSSNEFGSDKTSMPSTI) is disordered. Polar residues predominate over residues 103-116 (NEFGSDKTSMPSTI). A run of 8 helical transmembrane segments spans residues 242 to 262 (YVIA…LGIA), 290 to 310 (LYPF…ILLF), 326 to 346 (LSIP…ITQF), 361 to 381 (LAGP…GLFL), 388 to 408 (ANDL…LGLI), 416 to 436 (AALH…WCGL), 474 to 494 (MLGL…YVLI), and 516 to 536 (ALVG…WDEL).

This sequence belongs to the peptidase M50B family. As to expression, expressed in roots, leaves, cotyledons, hypocotyls, stems, flowers and siliques.

The protein resides in the plastid. It is found in the chloroplast membrane. Functionally, membrane-associated and ATP-independent metalloprotease required for development of both thylakoid grana and well-organized lamellae in chloroplast. Required for the accumulation of chlorophyll and chlorophyll a/b binding (CAB) proteins (from both PS I and PS II) in chloroplast membranes, and for grana formation and normal chloroplast development. Involved in the regulation of nuclear gene expression in response to ammonium stress and interacts with ABA signaling. Carries out beta-casein degradation in an ATP-independent manner in vitro. In Arabidopsis thaliana (Mouse-ear cress), this protein is Probable zinc metalloprotease EGY1, chloroplastic (EGY1).